Reading from the N-terminus, the 407-residue chain is Putative mannan endo-1,4-beta-mannosidase 9 (407 aa).

Residues 1-31 form the signal peptide; the sequence is MGSKRRVILLPTLGVVVLAIAAAVLLHAGEA. Residues Trp-95 and Asn-208 each coordinate substrate. Glu-209 serves as the catalytic Proton donor. Tyr-284 provides a ligand contact to substrate. Glu-324 serves as the catalytic Nucleophile. Trp-366 provides a ligand contact to substrate.

It belongs to the glycosyl hydrolase 5 (cellulase A) family. As to expression, expression not detected.

Its subcellular location is the secreted. The catalysed reaction is Random hydrolysis of (1-&gt;4)-beta-D-mannosidic linkages in mannans, galactomannans and glucomannans.. This chain is Putative mannan endo-1,4-beta-mannosidase 9 (MAN9), found in Oryza sativa subsp. japonica (Rice).